Here is a 59-residue protein sequence, read N- to C-terminus: Large ribosomal subunit protein uL30 (59 aa).

The protein belongs to the universal ribosomal protein uL30 family. As to quaternary structure, part of the 50S ribosomal subunit.

This Macrococcus caseolyticus (strain JCSC5402) (Macrococcoides caseolyticum) protein is Large ribosomal subunit protein uL30.